Here is an 80-residue protein sequence, read N- to C-terminus: Cytochrome c oxidase subunit 7B, mitochondrial (80 aa).

The N-terminal 24 residues, 1–24 (MLPLAKNALSRLQVRSIQQVVARQ), are a transit peptide targeting the mitochondrion. Topologically, residues 25–32 (SHQKKTPT) are mitochondrial matrix. Residues 33-59 (FHDKYGNAVLAGGSIFCISAWTYTATQ) form a helical membrane-spanning segment. Residues 60–80 (IGIEWNLSPVGRVTPKEWRDQ) are Mitochondrial intermembrane-facing.

It belongs to the cytochrome c oxidase VIIb family. Component of the cytochrome c oxidase (complex IV, CIV), a multisubunit enzyme composed of 14 subunits. The complex is composed of a catalytic core of 3 subunits MT-CO1, MT-CO2 and MT-CO3, encoded in the mitochondrial DNA, and 11 supernumerary subunits COX4I, COX5A, COX5B, COX6A, COX6B, COX6C, COX7A, COX7B, COX7C, COX8 and NDUFA4, which are encoded in the nuclear genome. The complex exists as a monomer or a dimer and forms supercomplexes (SCs) in the inner mitochondrial membrane with NADH-ubiquinone oxidoreductase (complex I, CI) and ubiquinol-cytochrome c oxidoreductase (cytochrome b-c1 complex, complex III, CIII), resulting in different assemblies (supercomplex SCI(1)III(2)IV(1) and megacomplex MCI(2)III(2)IV(2)).

It is found in the mitochondrion inner membrane. It functions in the pathway energy metabolism; oxidative phosphorylation. Component of the cytochrome c oxidase, the last enzyme in the mitochondrial electron transport chain which drives oxidative phosphorylation. The respiratory chain contains 3 multisubunit complexes succinate dehydrogenase (complex II, CII), ubiquinol-cytochrome c oxidoreductase (cytochrome b-c1 complex, complex III, CIII) and cytochrome c oxidase (complex IV, CIV), that cooperate to transfer electrons derived from NADH and succinate to molecular oxygen, creating an electrochemical gradient over the inner membrane that drives transmembrane transport and the ATP synthase. Cytochrome c oxidase is the component of the respiratory chain that catalyzes the reduction of oxygen to water. Electrons originating from reduced cytochrome c in the intermembrane space (IMS) are transferred via the dinuclear copper A center (CU(A)) of subunit 2 and heme A of subunit 1 to the active site in subunit 1, a binuclear center (BNC) formed by heme A3 and copper B (CU(B)). The BNC reduces molecular oxygen to 2 water molecules using 4 electrons from cytochrome c in the IMS and 4 protons from the mitochondrial matrix. Plays a role in proper central nervous system (CNS) development in vertebrates. In Rattus norvegicus (Rat), this protein is Cytochrome c oxidase subunit 7B, mitochondrial (Cox7b).